The chain runs to 96 residues: Putative membrane protein insertion efficiency factor (96 aa).

This sequence belongs to the UPF0161 family.

The protein resides in the cell inner membrane. In terms of biological role, could be involved in insertion of integral membrane proteins into the membrane. This is Putative membrane protein insertion efficiency factor from Borreliella afzelii (strain PKo) (Borrelia afzelii).